Reading from the N-terminus, the 131-residue chain is Holo-[acyl-carrier-protein] synthase (131 aa).

Residues D8 and E59 each contribute to the Mg(2+) site.

It belongs to the P-Pant transferase superfamily. AcpS family. The cofactor is Mg(2+).

The protein localises to the cytoplasm. It catalyses the reaction apo-[ACP] + CoA = holo-[ACP] + adenosine 3',5'-bisphosphate + H(+). In terms of biological role, transfers the 4'-phosphopantetheine moiety from coenzyme A to a Ser of acyl-carrier-protein. The protein is Holo-[acyl-carrier-protein] synthase of Paramagnetospirillum magneticum (strain ATCC 700264 / AMB-1) (Magnetospirillum magneticum).